A 134-amino-acid chain; its full sequence is Small ribosomal subunit protein bS6 (134 aa).

The tract at residues 99–134 (EPSAMMQKRDRDERKDRERGRRRDEDGFSGDRNEEN) is disordered. A compositionally biased stretch (basic and acidic residues) spans 105–134 (QKRDRDERKDRERGRRRDEDGFSGDRNEEN).

It belongs to the bacterial ribosomal protein bS6 family.

Its function is as follows. Binds together with bS18 to 16S ribosomal RNA. This Methylobacterium nodulans (strain LMG 21967 / CNCM I-2342 / ORS 2060) protein is Small ribosomal subunit protein bS6.